Here is a 444-residue protein sequence, read N- to C-terminus: MKHFEANFDGLVGPTHNYAGLSFGNVASLSNAALVSNPKAAAKQGLQKAKALADMGMVQGMLAPQERPDLYTLRRIGFSGSDANVLKQAAKEAPMLLNACCSASSMWTANAATVSPSADTRDGKLHFTPANLVDKLHRSIEPLTTGRILTATFSDPHYFHHHSHLPEHNSFGDEGAANQTRLCNEYGHAGVELFVYGQEATNPNAPKPQKYPARQTLEASMAVARLHQLEEDNCVFIQQNPDVIDQGVFHNDVIAVGNQNVLFYHEQAFLNTQHKIDEIKRKLDTELYFIEVPTAKVAINDAVKSYLFNTQIITLPSGEMAIIAPTDCQENPAVFAYLNELLTLNTPIKQVLYFDVKQSMQNGGGPACLRLRVAMNEMEVAAVNQHTLMNDALFARLNLWVDKHYRDRLTTQDLADPQLIIESRTALDELTQIMKLGSVYQFQR.

Residues 19–28 (AGLSFGNVAS), Asn-110, and 137–138 (HR) each bind substrate. Glu-174 is a catalytic residue. Substrate is bound at residue Arg-214. His-250 is an active-site residue. 2 residues coordinate substrate: Asp-252 and Asn-362. Cys-368 acts as the Nucleophile in catalysis.

The protein belongs to the succinylarginine dihydrolase family. Homodimer.

The catalysed reaction is N(2)-succinyl-L-arginine + 2 H2O + 2 H(+) = N(2)-succinyl-L-ornithine + 2 NH4(+) + CO2. It functions in the pathway amino-acid degradation; L-arginine degradation via AST pathway; L-glutamate and succinate from L-arginine: step 2/5. Functionally, catalyzes the hydrolysis of N(2)-succinylarginine into N(2)-succinylornithine, ammonia and CO(2). This is N-succinylarginine dihydrolase from Shewanella baltica (strain OS185).